Reading from the N-terminus, the 80-residue chain is Small, acid-soluble spore protein Tlp (80 aa).

The protein belongs to the Tlp family.

Its subcellular location is the spore core. The polypeptide is Small, acid-soluble spore protein Tlp (Bacillus pumilus (strain SAFR-032)).